A 207-amino-acid chain; its full sequence is Ras-related protein Rab-8B (207 aa).

Residues serine 17, glycine 18, valine 19, glycine 20, lysine 21, threonine 22, cysteine 23, threonine 35, serine 39, and threonine 40 each coordinate GTP. Threonine 22 lines the Mg(2+) pocket. Short sequence motifs (switch) lie at residues 31-45 (DAFNTTFISTIGIDF) and 63-80 (DTAGQERFRTITTAYYRG). Residues threonine 40 and aspartate 63 each coordinate Mg(2+). Position 66 (glycine 66) interacts with GTP. Phosphothreonine is present on threonine 72. GTP-binding residues include asparagine 121, lysine 122, aspartate 124, alanine 152, and lysine 153. The residue at position 180 (serine 180) is a Phosphoserine. A Cysteine methyl ester modification is found at cysteine 204. A lipid anchor (S-geranylgeranyl cysteine) is attached at cysteine 204. Positions 205–207 (LLL) are cleaved as a propeptide — removed in mature form.

The protein belongs to the small GTPase superfamily. Rab family. In terms of assembly, associated with actin, delta-catenin and alpha and beta tubulins. Interacts with OTOF. Interacts with PEX5R. Interacts with RAB3IP. Interacts with VIM. Interacts with CDH1. Interacts with MICALL2. Interacts with GDI1, GDI2, CHML and CHM; phosphorylation at Thr-72 disrupts these interactions. Interacts with MICAL1. The cofactor is Mg(2+). Post-translationally, phosphorylation of Thr-72 in the switch II region by LRRK2 prevents the association of RAB regulatory proteins, including CHM, CHML and RAB GDP dissociation inhibitors GDI1 and GDI2.

The protein resides in the cell membrane. It localises to the cytoplasmic vesicle. Its subcellular location is the phagosome membrane. The protein localises to the endosome membrane. It catalyses the reaction GTP + H2O = GDP + phosphate + H(+). Regulated by guanine nucleotide exchange factors (GEFs) including RAB3IP/RABIN8 which promotes the exchange of bound GDP for free GTP. Regulated by GTPase activating proteins (GAPs) which increase the GTP hydrolysis activity. Inhibited by GDP dissociation inhibitors (GDIs). In terms of biological role, the small GTPases Rab are key regulators of intracellular membrane trafficking, from the formation of transport vesicles to their fusion with membranes. Rabs cycle between an inactive GDP-bound form and an active GTP-bound form that is able to recruit to membranes different sets of downstream effectors directly responsible for vesicle formation, movement, tethering and fusion. RAB8B may be involved in polarized vesicular trafficking and neurotransmitter release. May participate in cell junction dynamics in Sertoli cells. May also participate in the export of a subset of neosynthesized proteins through a Rab8-Rab10-Rab11-dependent endososomal export route. The chain is Ras-related protein Rab-8B (RAB8B) from Pongo abelii (Sumatran orangutan).